Here is a 237-residue protein sequence, read N- to C-terminus: Demethylmenaquinone methyltransferase (237 aa).

Residues T58, D79, and 106 to 107 (NA) each bind S-adenosyl-L-methionine.

The protein belongs to the class I-like SAM-binding methyltransferase superfamily. MenG/UbiE family.

It catalyses the reaction a 2-demethylmenaquinol + S-adenosyl-L-methionine = a menaquinol + S-adenosyl-L-homocysteine + H(+). The protein operates within quinol/quinone metabolism; menaquinone biosynthesis; menaquinol from 1,4-dihydroxy-2-naphthoate: step 2/2. Its function is as follows. Methyltransferase required for the conversion of demethylmenaquinol (DMKH2) to menaquinol (MKH2). This Anoxybacillus flavithermus (strain DSM 21510 / WK1) protein is Demethylmenaquinone methyltransferase.